Reading from the N-terminus, the 143-residue chain is Putative pre-16S rRNA nuclease (143 aa).

The protein belongs to the YqgF nuclease family.

The protein resides in the cytoplasm. Functionally, could be a nuclease involved in processing of the 5'-end of pre-16S rRNA. This chain is Putative pre-16S rRNA nuclease, found in Lactococcus lactis subsp. cremoris (strain MG1363).